Here is a 124-residue protein sequence, read N- to C-terminus: Fluoride-specific ion channel FluC (124 aa).

Helical transmembrane passes span 5 to 27 (LFVA…LMLQ), 42 to 62 (ILGS…EVSP), 63 to 83 (EIKA…STFS), and 95 to 115 (LVKA…VVYL). Residues glycine 74 and threonine 77 each coordinate Na(+).

Belongs to the fluoride channel Fluc/FEX (TC 1.A.43) family.

It localises to the cell inner membrane. The enzyme catalyses fluoride(in) = fluoride(out). Na(+) is not transported, but it plays an essential structural role and its presence is essential for fluoride channel function. In terms of biological role, fluoride-specific ion channel. Important for reducing fluoride concentration in the cell, thus reducing its toxicity. The sequence is that of Fluoride-specific ion channel FluC from Shewanella piezotolerans (strain WP3 / JCM 13877).